We begin with the raw amino-acid sequence, 820 residues long: Probable protease Ga0182885_104520 (820 aa).

It belongs to the peptidase C25 family.

In terms of biological role, probably a dedicated protease for substrate gasdermin bGSDM; cleaves the bGSDM precursor, releasing the pore-forming moiety, which integrates into the membrane and triggers cell death. Involved in defense against bacteriophages. Expression of bacterial gasdermin (bGSDM) and this neighboring protease is toxic in E.coli. In Desulfuromonadales bacterium, this protein is Probable protease Ga0182885_104520.